The sequence spans 390 residues: uncharacterized protein (390 aa).

This is an uncharacterized protein from Acanthamoeba polyphaga (Amoeba).